A 266-amino-acid chain; its full sequence is Thiazole synthase (266 aa).

The active-site Schiff-base intermediate with DXP is the lysine 107. 1-deoxy-D-xylulose 5-phosphate-binding positions include glycine 168, 194–195 (AG), and 216–217 (NT).

Belongs to the ThiG family. Homotetramer. Forms heterodimers with either ThiH or ThiS.

The protein localises to the cytoplasm. The enzyme catalyses [ThiS sulfur-carrier protein]-C-terminal-Gly-aminoethanethioate + 2-iminoacetate + 1-deoxy-D-xylulose 5-phosphate = [ThiS sulfur-carrier protein]-C-terminal Gly-Gly + 2-[(2R,5Z)-2-carboxy-4-methylthiazol-5(2H)-ylidene]ethyl phosphate + 2 H2O + H(+). The protein operates within cofactor biosynthesis; thiamine diphosphate biosynthesis. Its function is as follows. Catalyzes the rearrangement of 1-deoxy-D-xylulose 5-phosphate (DXP) to produce the thiazole phosphate moiety of thiamine. Sulfur is provided by the thiocarboxylate moiety of the carrier protein ThiS. In vitro, sulfur can be provided by H(2)S. In Azorhizobium caulinodans (strain ATCC 43989 / DSM 5975 / JCM 20966 / LMG 6465 / NBRC 14845 / NCIMB 13405 / ORS 571), this protein is Thiazole synthase.